A 264-amino-acid chain; its full sequence is 3-methyl-2-oxobutanoate hydroxymethyltransferase (264 aa).

Positions 45 and 84 each coordinate Mg(2+). Residues 45–46, aspartate 84, and lysine 112 each bind 3-methyl-2-oxobutanoate; that span reads DS. Glutamate 114 serves as a coordination point for Mg(2+). Residue glutamate 181 is the Proton acceptor of the active site.

This sequence belongs to the PanB family. As to quaternary structure, homodecamer; pentamer of dimers. Requires Mg(2+) as cofactor.

The protein localises to the cytoplasm. It carries out the reaction 3-methyl-2-oxobutanoate + (6R)-5,10-methylene-5,6,7,8-tetrahydrofolate + H2O = 2-dehydropantoate + (6S)-5,6,7,8-tetrahydrofolate. It participates in cofactor biosynthesis; (R)-pantothenate biosynthesis; (R)-pantoate from 3-methyl-2-oxobutanoate: step 1/2. Its function is as follows. Catalyzes the reversible reaction in which hydroxymethyl group from 5,10-methylenetetrahydrofolate is transferred onto alpha-ketoisovalerate to form ketopantoate. This is 3-methyl-2-oxobutanoate hydroxymethyltransferase from Vibrio cholerae serotype O1 (strain ATCC 39541 / Classical Ogawa 395 / O395).